Here is a 190-residue protein sequence, read N- to C-terminus: Shikimate kinase (190 aa).

15–20 (GSGKST) lines the ATP pocket. Mg(2+) is bound at residue Ser19. Substrate-binding residues include Asp37, Arg61, and Gly83. ATP is bound at residue Arg121. Arg148 provides a ligand contact to substrate.

This sequence belongs to the shikimate kinase family. In terms of assembly, monomer. Requires Mg(2+) as cofactor.

The protein localises to the cytoplasm. It carries out the reaction shikimate + ATP = 3-phosphoshikimate + ADP + H(+). The protein operates within metabolic intermediate biosynthesis; chorismate biosynthesis; chorismate from D-erythrose 4-phosphate and phosphoenolpyruvate: step 5/7. Functionally, catalyzes the specific phosphorylation of the 3-hydroxyl group of shikimic acid using ATP as a cosubstrate. The chain is Shikimate kinase from Chlorobium chlorochromatii (strain CaD3).